Consider the following 337-residue polypeptide: MSSVLTQPLAFHPPRPAVQPREHGRWSVDEIEALFNLPFPELMHRAQTVHRENFDPTRVEFATLLSVKTGGCAEDCGYCPQAARYDTGVEASKLMEPAEVLAAAQRAQAAGATRFCMGAAWRSPKDRDIEKVAELVRTVKALGLETCATLGMLEDGHAQTLQSAGLDYYNHNLDSAPDFYGDIITTRDYQDRLDTLARVRSAGVKVCCGGIVGMGETRRQRAGLVAELANLTPYPESVPINNLVKVEGTPLANQADLDPFEFVRTIAVARITMPTARVRLSAGRQQMGDGVQALCFLAGANSIFYGDKLLTTGNPDTEADVTLLQRLGMSRSAPDVR.

The disordered stretch occupies residues 1–23; that stretch reads MSSVLTQPLAFHPPRPAVQPREH. The Radical SAM core domain maps to 57–284; that stretch reads TRVEFATLLS…TARVRLSAGR (228 aa). The [4Fe-4S] cluster site is built by Cys-72, Cys-76, and Cys-79. [2Fe-2S] cluster is bound by residues Cys-116, Cys-147, Cys-207, and Arg-279.

This sequence belongs to the radical SAM superfamily. Biotin synthase family. In terms of assembly, homodimer. The cofactor is [4Fe-4S] cluster. It depends on [2Fe-2S] cluster as a cofactor.

It carries out the reaction (4R,5S)-dethiobiotin + (sulfur carrier)-SH + 2 reduced [2Fe-2S]-[ferredoxin] + 2 S-adenosyl-L-methionine = (sulfur carrier)-H + biotin + 2 5'-deoxyadenosine + 2 L-methionine + 2 oxidized [2Fe-2S]-[ferredoxin]. It participates in cofactor biosynthesis; biotin biosynthesis; biotin from 7,8-diaminononanoate: step 2/2. Its function is as follows. Catalyzes the conversion of dethiobiotin (DTB) to biotin by the insertion of a sulfur atom into dethiobiotin via a radical-based mechanism. The sequence is that of Biotin synthase 1 from Polaromonas sp. (strain JS666 / ATCC BAA-500).